Reading from the N-terminus, the 203-residue chain is Large ribosomal subunit protein bL25 (203 aa).

It belongs to the bacterial ribosomal protein bL25 family. CTC subfamily. In terms of assembly, part of the 50S ribosomal subunit; part of the 5S rRNA/L5/L18/L25 subcomplex. Contacts the 5S rRNA. Binds to the 5S rRNA independently of L5 and L18.

Its function is as follows. This is one of the proteins that binds to the 5S RNA in the ribosome where it forms part of the central protuberance. The chain is Large ribosomal subunit protein bL25 from Rickettsia africae (strain ESF-5).